The sequence spans 861 residues: 1,4-alpha-glucan-branching enzyme (861 aa).

Residues W173 and K208 each contribute to the (1,4-alpha-D-glucosyl)n site. The active-site Nucleophile is D429. E484 (proton donor) is an active-site residue.

Belongs to the glycosyl hydrolase 13 family. GlgB subfamily. As to quaternary structure, monomer.

Its subcellular location is the plastid. It is found in the chloroplast. It localises to the amyloplast. It catalyses the reaction Transfers a segment of a (1-&gt;4)-alpha-D-glucan chain to a primary hydroxy group in a similar glucan chain.. It functions in the pathway glycan biosynthesis; starch biosynthesis. In terms of biological role, catalyzes the formation of the alpha-1,6-glucosidic linkages in starch by scission of a 1,4-alpha-linked oligosaccharide from growing alpha-1,4-glucan chains and the subsequent attachment of the oligosaccharide to the alpha-1,6 position. The chain is 1,4-alpha-glucan-branching enzyme (SBE1) from Solanum tuberosum (Potato).